The following is a 440-amino-acid chain: GTPase Der (440 aa).

2 consecutive EngA-type G domains span residues 3–167 (PIIA…PYDR) and 176–351 (TRIA…EQYC). Residues 9 to 16 (GRPNVGKS), 56 to 60 (DTGGF), 119 to 122 (NKVD), 182 to 189 (GRPNVGKS), 229 to 233 (DTAGI), and 294 to 297 (NKWD) each bind GTP. The 85-residue stretch at 352–436 (KRVTTGELNR…PLKLIFRGRD (85 aa)) folds into the KH-like domain.

The protein belongs to the TRAFAC class TrmE-Era-EngA-EngB-Septin-like GTPase superfamily. EngA (Der) GTPase family. As to quaternary structure, associates with the 50S ribosomal subunit.

Its function is as follows. GTPase that plays an essential role in the late steps of ribosome biogenesis. The sequence is that of GTPase Der from Geobacter sp. (strain M21).